The sequence spans 409 residues: Elongation factor Tu (409 aa).

Residues 10–214 (KPHVNIGTIG…AVDSYIPTPE (205 aa)) form the tr-type G domain. The tract at residues 19–26 (GHVDHGKT) is G1. 19 to 26 (GHVDHGKT) contributes to the GTP binding site. Thr26 is a Mg(2+) binding site. Residues 60-64 (GITIN) form a G2 region. The interval 81–84 (DCPG) is G3. GTP contacts are provided by residues 81–85 (DCPGH) and 136–139 (NKVD). Residues 136 to 139 (NKVD) are G4. Positions 174-176 (SGL) are G5.

This sequence belongs to the TRAFAC class translation factor GTPase superfamily. Classic translation factor GTPase family. EF-Tu/EF-1A subfamily. As to quaternary structure, monomer.

The protein localises to the cytoplasm. The enzyme catalyses GTP + H2O = GDP + phosphate + H(+). Functionally, GTP hydrolase that promotes the GTP-dependent binding of aminoacyl-tRNA to the A-site of ribosomes during protein biosynthesis. In Cyanothece sp. (strain PCC 7425 / ATCC 29141), this protein is Elongation factor Tu.